The primary structure comprises 70 residues: uncharacterized protein (70 aa).

This is an uncharacterized protein from Schizosaccharomyces pombe (strain 972 / ATCC 24843) (Fission yeast).